The following is a 500-amino-acid chain: Histidine--tRNA ligase (500 aa).

This sequence belongs to the class-II aminoacyl-tRNA synthetase family. Homodimer.

Its subcellular location is the cytoplasm. The catalysed reaction is tRNA(His) + L-histidine + ATP = L-histidyl-tRNA(His) + AMP + diphosphate + H(+). The sequence is that of Histidine--tRNA ligase (hisS) from Mesorhizobium japonicum (strain LMG 29417 / CECT 9101 / MAFF 303099) (Mesorhizobium loti (strain MAFF 303099)).